The primary structure comprises 73 residues: Protein SlyX homolog (73 aa).

Belongs to the SlyX family.

This is Protein SlyX homolog from Haemophilus influenzae (strain PittEE).